The following is a 308-amino-acid chain: Putative mitochondrial transporter UCP3 (308 aa).

Residues 1–10 are Mitochondrial intermembrane-facing; it reads MVGLQPSEVP. A helical transmembrane segment spans residues 11–32; that stretch reads PTTVVKFLGAGTAACFADLLTF. 3 Solcar repeats span residues 11–102, 111–202, and 211–296; these read PTTV…VKQF, SSVA…IKEK, and DNFP…LKRA. Residues 33-73 are Mitochondrial matrix-facing; the sequence is PLDTAKVRLQIQGENPGAQSVQYRGVLGTILTMVRTEGPRS. A helical membrane pass occupies residues 74 to 96; the sequence is PYSGLVAGLHRQMSFASIRIGLY. Topologically, residues 97 to 116 are mitochondrial intermembrane; it reads DSVKQFYTPKGADHSSVAIR. The helical transmembrane segment at 117–133 threads the bilayer; that stretch reads ILAGCTTGAMAVTCAQP. Residues 134-179 are Mitochondrial matrix-facing; it reads TDVVKVRFQAMIRLGTGGERKYRGTMDAYRTIAREEGVRGLWKGTW. The chain crosses the membrane as a helical span at residues 180-196; that stretch reads PNITRNAIVNCAEMVTY. The Mitochondrial intermembrane segment spans residues 197 to 213; it reads DIIKEKLLESHLFTDNF. Residues 214–233 traverse the membrane as a helical segment; sequence PCHFVSAFGAGFCATVVASP. Over 234–267 the chain is Mitochondrial matrix; sequence VDVVKTRYMNAPLGRYRSPLHCMLKMVAQEGPTA. The helical transmembrane segment at 268-290 threads the bilayer; that stretch reads FYKGFVPSFLRLGAWNVMMFVTY. Positions 275–297 are purine nucleotide binding; the sequence is SFLRLGAWNVMMFVTYEQLKRAL. Residues 291 to 308 lie on the Mitochondrial intermembrane side of the membrane; sequence EQLKRALMKVQVLRESPF.

Belongs to the mitochondrial carrier (TC 2.A.29) family. Interacts with HAX1; the interaction is direct and calcium-dependent.

The protein resides in the mitochondrion inner membrane. With respect to regulation, inhibited by purine nucleotides and inorganic phosphate (in vitro). Its function is as follows. Putative transmembrane transporter that plays a role in mitochondrial metabolism via an as yet unclear mechanism. Originally, this mitochondrial protein was thought to act as a proton transmembrane transporter from the mitochondrial intermembrane space into the matrix, causing proton leaks through the inner mitochondrial membrane, thereby uncoupling mitochondrial membrane potential generation from ATP synthesis. However, this function is controversial and uncoupling may not be the function, or at least not the main function, but rather a consequence of more conventional metabolite transporter activity. This Mus musculus (Mouse) protein is Putative mitochondrial transporter UCP3.